A 243-amino-acid polypeptide reads, in one-letter code: Ras-related protein Rab-12 (243 aa).

The residue at position 1 (methionine 1) is an N-acetylmethionine. Positions 1–36 (MDPSAALHRRPAGGGLGAVSPALSGGQARRRKQPPR) are disordered. Residues serine 20 and serine 24 each carry the phosphoserine modification. 7 residues coordinate GTP: glycine 51, valine 52, glycine 53, lysine 54, threonine 55, serine 72, and threonine 73. Residue threonine 55 participates in Mg(2+) binding. Short sequence motifs (switch) lie at residues 64-78 (DTFC…GVDF) and 96-113 (DTAG…YYRS). The Mg(2+) site is built by threonine 73 and aspartate 96. Glycine 99 contacts GTP. At serine 105 the chain carries Phosphoserine. Residues asparagine 154, lysine 155, aspartate 157, serine 185, alanine 186, and lysine 187 each coordinate GTP. S-geranylgeranyl cysteine attachment occurs at residues cysteine 242 and cysteine 243.

The protein belongs to the small GTPase superfamily. Rab family. Interacts with RABIF and OPTN. Interacts with LRRK2; interaction facilitates phosphorylation of Ser-105. Interacts with GDI1, GDI2 and CHM; these interactions are disrupted by phosphorylation on Ser-105. Interacts with RILPL1 and RILPL2; these interactions are dependent on phosphorylation of Ser-105. Mg(2+) is required as a cofactor. In terms of processing, phosphorylation of Ser-105 in the switch II region by LRRK2 prevents the association of RAB regulatory proteins, including CHM and RAB GDP dissociation inhibitors GDI1 and GDI2. In terms of tissue distribution, highest levels in skeletal and cardiac muscle. Also found in comparable amounts in brain, spinal cord and lung. Also detected in testis where it is expressed by Sertoli cells of the seminiferous tubules (at protein level).

Its subcellular location is the recycling endosome membrane. It localises to the lysosome membrane. The protein resides in the golgi apparatus membrane. The protein localises to the cytoplasmic vesicle. It is found in the autophagosome. It catalyses the reaction GTP + H2O = GDP + phosphate + H(+). With respect to regulation, regulated by guanine nucleotide exchange factors (GEFs) including DENND3 which promote the exchange of bound GDP for free GTP. Regulated by GTPase activating proteins (GAPs) which increase the GTP hydrolysis activity. Inhibited by GDP dissociation inhibitors (GDIs). In terms of biological role, the small GTPases Rab are key regulators of intracellular membrane trafficking, from the formation of transport vesicles to their fusion with membranes. Rabs cycle between an inactive GDP-bound form and an active GTP-bound form that is able to recruit to membranes different sets of downstream effectors directly responsible for vesicle formation, movement, tethering and fusion. RAB12 may play a role in protein transport from recycling endosomes to lysosomes regulating, for instance, the degradation of the transferrin receptor. Involved in autophagy. The chain is Ras-related protein Rab-12 from Rattus norvegicus (Rat).